A 349-amino-acid chain; its full sequence is Isopentenyl-diphosphate delta-isomerase (349 aa).

6 to 7 (RK) is a substrate binding site. Residues 62–64 (AMT), S93, and N122 each bind FMN. Substrate is bound at residue Q152. E153 contacts Mg(2+). Residues K184, T214, 258 to 259 (GG), and 280 to 281 (AG) contribute to the FMN site.

The protein belongs to the IPP isomerase type 2 family. Homooctamer. Dimer of tetramers. FMN is required as a cofactor. It depends on NADPH as a cofactor. Requires Mg(2+) as cofactor.

It is found in the cytoplasm. The catalysed reaction is isopentenyl diphosphate = dimethylallyl diphosphate. Involved in the biosynthesis of isoprenoids. Catalyzes the 1,3-allylic rearrangement of the homoallylic substrate isopentenyl (IPP) to its allylic isomer, dimethylallyl diphosphate (DMAPP). The protein is Isopentenyl-diphosphate delta-isomerase of Bacillus cereus (strain B4264).